Here is a 246-residue protein sequence, read N- to C-terminus: Uridylate kinase (246 aa).

11–14 is an ATP binding site; sequence KLSG. Gly-53 lines the UMP pocket. Residues Gly-54 and Arg-58 each contribute to the ATP site. Residues Asp-73 and 134 to 141 each bind UMP; that span reads TGNPYFTT. ATP is bound by residues Thr-161, Tyr-167, and Asp-170.

The protein belongs to the UMP kinase family. Homohexamer.

It is found in the cytoplasm. The catalysed reaction is UMP + ATP = UDP + ADP. It participates in pyrimidine metabolism; CTP biosynthesis via de novo pathway; UDP from UMP (UMPK route): step 1/1. Its activity is regulated as follows. Inhibited by UTP. Its function is as follows. Catalyzes the reversible phosphorylation of UMP to UDP. In Leptospira borgpetersenii serovar Hardjo-bovis (strain JB197), this protein is Uridylate kinase.